The following is a 190-amino-acid chain: HTH-type transcriptional repressor AcnR (190 aa).

The HTH tetR-type domain maps to 10–70 (SMRRQEILEG…ALAREDAARM (61 aa)). The H-T-H motif DNA-binding region spans 33–52 (TVRRLEETVGKSRGAIFHHF). Citrate contacts are provided by residues 79 to 80 (LV), R130, and N134. A Mg(2+)-binding site is contributed by E181. R185 provides a ligand contact to citrate.

Homodimer.

Functionally, acnR negatively controls the expression of the aconitase gene acn. The polypeptide is HTH-type transcriptional repressor AcnR (Corynebacterium diphtheriae (strain ATCC 700971 / NCTC 13129 / Biotype gravis)).